A 493-amino-acid polypeptide reads, in one-letter code: MVEIKKICCIGAGYVGGPTCSVIARMCPEIRVTVVDVNEARINAWNSPTLPIYEPGLKEVVESCRGKNLFFSTNIDDAIREADLVFISVNTPTKTYGMGKGRAADLKYIEACARRIVQNSNGYKIVTEKSTVPVRAAESIRRIFDANTKPNLNLQVLSNPEFLAEGTAIKDLKNPDRVLIGGDETPEGQRAVQALCAVYEHWVPKEKILTTNTWSSELSKLAANAFLAQRISSINSISALCESTGADVEEVATAIGMDQRIGNKFLKASVGFGGGCFQKDVLNLVYLCEALNLPEVARYWQQVIDMNDYQRRRFASRIIDSLFNTVTDKKIAILGFAFKKDTGDTRESSSIYISKYLMDEGAHLHIYDPKVPREQIVVDLSHPGVSADDQVSRLVTISKDPYEACDGAHALVICTEWDMFKELDYERIHKRMLKPAFIFDGRRVLDGLHNELQTIGFQIETIGKKVSSKRIPYTPGEIPKFSLQDPPNKKPKV.

NAD(+) contacts are provided by residues 11–16 (GAGYVG), aspartate 36, arginine 41, and 89–93 (VNTPT). Positions 88–110 (SVNTPTKTYGMGKGRAADLKYIE) are disordered. N6-acetyllysine is present on lysine 107. The allosteric switch region stretch occupies residues 129-135 (KSTVPVR). 130–132 (STV) provides a ligand contact to NAD(+). The active-site Proton donor/acceptor is the glutamate 161. Substrate-binding positions include 161–165 (EFLAE), 220–224 (KLAAN), arginine 260, and 267–273 (KASVGFG). Glutamate 165 is a binding site for NAD(+). The active-site Proton donor/acceptor is the lysine 220. Cysteine 276 (nucleophile) is an active-site residue. 276-279 (CFQK) is a binding site for NAD(+). The important for formation of active hexamer structure stretch occupies residues 321–325 (SLFNT). Residue 338-339 (FK) participates in substrate binding. Arginine 346 is an NAD(+) binding site. Substrate is bound at residue arginine 442. The disordered stretch occupies residues 466–493 (VSSKRIPYTPGEIPKFSLQDPPNKKPKV). Position 474 is a phosphothreonine (threonine 474).

Belongs to the UDP-glucose/GDP-mannose dehydrogenase family. Homohexamer.

The catalysed reaction is UDP-alpha-D-glucose + 2 NAD(+) + H2O = UDP-alpha-D-glucuronate + 2 NADH + 3 H(+). Its pathway is nucleotide-sugar biosynthesis; UDP-alpha-D-glucuronate biosynthesis; UDP-alpha-D-glucuronate from UDP-alpha-D-glucose: step 1/1. UDP-alpha-D-xylose (UDX) acts as a feedback inhibitor. It binds at the same site as the substrate, but functions as allosteric inhibitor by triggering a conformation change that disrupts the active hexameric ring structure and gives rise to an inactive, horseshoe-shaped hexamer. Functionally, catalyzes the formation of UDP-alpha-D-glucuronate, a constituent of complex glycosaminoglycans. Required for the biosynthesis of chondroitin sulfate and heparan sulfate. Required for embryonic development via its role in the biosynthesis of glycosaminoglycans. Required for proper brain and neuronal development. This is UDP-glucose 6-dehydrogenase (Ugdh) from Rattus norvegicus (Rat).